We begin with the raw amino-acid sequence, 310 residues long: ADP-L-glycero-D-manno-heptose-6-epimerase (310 aa).

NADP(+) is bound by residues 10 to 11, 31 to 32, Lys38, Lys53, 75 to 79, and Asn92; these read FI, DN, and EGACS. Tyr140 (proton acceptor) is an active-site residue. Position 144 (Lys144) interacts with NADP(+). Asn169 provides a ligand contact to substrate. NADP(+) contacts are provided by Val170 and Lys178. Lys178 functions as the Proton acceptor in the catalytic mechanism. Residues Ser180, His187, 201-204, Arg209, and Tyr272 each bind substrate; that span reads FEGS.

The protein belongs to the NAD(P)-dependent epimerase/dehydratase family. HldD subfamily. As to quaternary structure, homopentamer. The cofactor is NADP(+).

It carries out the reaction ADP-D-glycero-beta-D-manno-heptose = ADP-L-glycero-beta-D-manno-heptose. It participates in nucleotide-sugar biosynthesis; ADP-L-glycero-beta-D-manno-heptose biosynthesis; ADP-L-glycero-beta-D-manno-heptose from D-glycero-beta-D-manno-heptose 7-phosphate: step 4/4. It functions in the pathway bacterial outer membrane biogenesis; LPS core biosynthesis. Catalyzes the interconversion between ADP-D-glycero-beta-D-manno-heptose and ADP-L-glycero-beta-D-manno-heptose via an epimerization at carbon 6 of the heptose. In Klebsiella pneumoniae, this protein is ADP-L-glycero-D-manno-heptose-6-epimerase.